A 293-amino-acid chain; its full sequence is Shikimate dehydrogenase (NADP(+)) (293 aa).

Residues 20–22 and Thr72 each bind shikimate; that span reads SLT. Lys76 (proton acceptor) is an active-site residue. Asn97 and Asp112 together coordinate shikimate. NADP(+)-binding positions include 136 to 140 and Ile230; that span reads GAGGA. Tyr232 is a binding site for shikimate. Gly253 is a binding site for NADP(+).

Belongs to the shikimate dehydrogenase family. Homodimer.

It carries out the reaction shikimate + NADP(+) = 3-dehydroshikimate + NADPH + H(+). It participates in metabolic intermediate biosynthesis; chorismate biosynthesis; chorismate from D-erythrose 4-phosphate and phosphoenolpyruvate: step 4/7. Involved in the biosynthesis of the chorismate, which leads to the biosynthesis of aromatic amino acids. Catalyzes the reversible NADPH linked reduction of 3-dehydroshikimate (DHSA) to yield shikimate (SA). This chain is Shikimate dehydrogenase (NADP(+)), found in Pseudarthrobacter chlorophenolicus (strain ATCC 700700 / DSM 12829 / CIP 107037 / JCM 12360 / KCTC 9906 / NCIMB 13794 / A6) (Arthrobacter chlorophenolicus).